A 294-amino-acid chain; its full sequence is uncharacterized protein (294 aa).

This is an uncharacterized protein from Diadromus pulchellus idnoreovirus 1 (DpIRV-1).